Here is a 672-residue protein sequence, read N- to C-terminus: Amidase chyE (672 aa).

The Nucleophile role is filled by C2. A Glutamine amidotransferase type-2 domain is found at 2–219 (CGISAFLCHP…PGHYLISRPN (218 aa)). Positions 250-639 (VRKRLLEAVK…TQEAVEKAFT (390 aa)) constitute an Asparagine synthetase domain.

This sequence belongs to the asparagine synthetase family.

The protein operates within pigment biosynthesis. In terms of biological role, amidase; part of the gene cluster that mediates the biosynthesis of the yellow pigment chrysogine. the NRPS chyA mediates the condensation of anthranilic acid and alanine into the intermediate 2-(2-aminopropanamido)benzoic acid. The remainder of the pathway is highly branched yielding at least 13 chrysogine-related compounds. The malonyl transferase chyE converts 2-(2-aminopropanamido)benzoic acid and 2-(2-aminopropanamido)benzamidine into 2-(2-(2-carboxyacetamido)propanamido)benzoic acid and 3-((1-((2-carbamoylphenyl)amino)-1-oxopropan-2-yl)amino)-3-oxopropanoic acid, respectively. ChyD is an amidase, being responsible for the amidation of the carboxylic acid moiety of 2-(2-aminopropanamido)benzoic acid, 2-(2-(2-carboxyacetamido)propanamido)benzoic acid and 2-(2-((4-amino-1-carboxy-4-oxobutyl)amino)propanamido)benzoic acid. ChyC is involved in the same reactions as ChyD, but plays a more minor role in the amidation reactions compared to chyD. The oxidoreductases chyH and chyM are involved in oxidation reactions that form N-pyruvoylanthranilamide from 2-(2-aminopropanamido)benzamidine and (1-((2-carbamoylphenyl)amino)-1-oxopropan-2-yl)glutamine, respectively. N-pyruvoylanthranilamide is further converted via two further branches in the pathway, yielding chrysogine and additional chrysogine-related coumpounds. Chrysogine is likely formed by a spontaneous ring closure from N-pyruvoylanthranilamide. This is Amidase chyE from Penicillium rubens (strain ATCC 28089 / DSM 1075 / NRRL 1951 / Wisconsin 54-1255) (Penicillium chrysogenum).